A 682-amino-acid polypeptide reads, in one-letter code: DNA-directed RNA polymerase subunit beta' (682 aa).

Zn(2+) is bound by residues Cys69, Cys71, Cys87, and Cys90. Asp489, Asp491, and Asp493 together coordinate Mg(2+).

This sequence belongs to the RNA polymerase beta' chain family. RpoC1 subfamily. In terms of assembly, in plastids the minimal PEP RNA polymerase catalytic core is composed of four subunits: alpha, beta, beta', and beta''. When a (nuclear-encoded) sigma factor is associated with the core the holoenzyme is formed, which can initiate transcription. The cofactor is Mg(2+). It depends on Zn(2+) as a cofactor.

The protein localises to the plastid. It localises to the chloroplast. It carries out the reaction RNA(n) + a ribonucleoside 5'-triphosphate = RNA(n+1) + diphosphate. Functionally, DNA-dependent RNA polymerase catalyzes the transcription of DNA into RNA using the four ribonucleoside triphosphates as substrates. In Acorus gramineus (Dwarf sweet flag), this protein is DNA-directed RNA polymerase subunit beta'.